Reading from the N-terminus, the 205-residue chain is 3-demethoxyubiquinol 3-hydroxylase (205 aa).

Fe cation contacts are provided by E54, E84, H87, E136, E168, and H171.

This sequence belongs to the COQ7 family. Requires Fe cation as cofactor.

Its subcellular location is the cell membrane. It carries out the reaction a 5-methoxy-2-methyl-3-(all-trans-polyprenyl)benzene-1,4-diol + AH2 + O2 = a 3-demethylubiquinol + A + H2O. It functions in the pathway cofactor biosynthesis; ubiquinone biosynthesis. Catalyzes the hydroxylation of 2-nonaprenyl-3-methyl-6-methoxy-1,4-benzoquinol during ubiquinone biosynthesis. In Paracidovorax citrulli (strain AAC00-1) (Acidovorax citrulli), this protein is 3-demethoxyubiquinol 3-hydroxylase.